We begin with the raw amino-acid sequence, 63 residues long: MLTLKKSMLLLFFLGTINLSLCEQERDADEEERRDDDEMDVEVEKRFLPLFLPKIICVITKKC.

The N-terminal stretch at 1–22 (MLTLKKSMLLLFFLGTINLSLC) is a signal peptide. A propeptide spanning residues 23-44 (EQERDADEEERRDDDEMDVEVE) is cleaved from the precursor. The cysteines at positions 57 and 63 are disulfide-linked.

As to expression, expressed by the skin glands.

It is found in the secreted. In terms of biological role, the synthetic peptide has antimicrobial activity against Gram-negative bacterium B.dysenteriae (MIC=35 ug/ml), against Gram-positive bacteria S.aureus ATCC 2592 (MIC=4.7 ug/ml) and B.subtilis ATCC 6633 (MIC=9.38 ug/ml) and against fungus C.albicans (MIC=18.75 ug/ml). Has no activity against Gram-negative bacterium E.coli ATCC 25922 but exhibits low hemolytic activity at concentrations up to 200 ug/ml. The protein is Jingdongin-1 of Amolops jingdongensis (Chinese torrent frog).